We begin with the raw amino-acid sequence, 270 residues long: Type III pantothenate kinase (270 aa).

19 to 26 (DIGNTSTT) serves as a coordination point for ATP. Substrate is bound by residues Tyr-109 and 116 to 119 (GADR). Asp-118 serves as the catalytic Proton acceptor. A K(+)-binding site is contributed by Asp-139. Position 142 (Thr-142) interacts with ATP. Thr-194 contributes to the substrate binding site.

It belongs to the type III pantothenate kinase family. As to quaternary structure, homodimer. The cofactor is NH4(+). It depends on K(+) as a cofactor.

The protein resides in the cytoplasm. It catalyses the reaction (R)-pantothenate + ATP = (R)-4'-phosphopantothenate + ADP + H(+). Its pathway is cofactor biosynthesis; coenzyme A biosynthesis; CoA from (R)-pantothenate: step 1/5. Functionally, catalyzes the phosphorylation of pantothenate (Pan), the first step in CoA biosynthesis. The chain is Type III pantothenate kinase from Chlorobaculum tepidum (strain ATCC 49652 / DSM 12025 / NBRC 103806 / TLS) (Chlorobium tepidum).